The following is a 316-amino-acid chain: Inactive peptidyl-prolyl cis-trans isomerase FKBP6 (316 aa).

Residues 43-132 form the PPIase FKBP-type domain; sequence DASVLVKYSG…LFEIELLDFL (90 aa). TPR repeat units follow at residues 160 to 193, 208 to 241, and 242 to 275; these read AATEREFGNYLFRQHRFYDAKVRYKRALLLLHRR, LLVLLNLSFTYLKLERPTTALCYGEQALVIDQKN, and AKALFRCGQACLLMTEYQKARDFLVQAQKAQPFN.

It belongs to the FKBP6 family. As to quaternary structure, interacts with HSP72/HSPA2 and CLTC. Interacts with GAPDH; leading to inhibit GAPDH catalytic activity. Interacts (via TPR repeats) with HSP90. Specifically expressed in testis and sperm.

It localises to the cytoplasm. The protein localises to the cytosol. It is found in the nucleus. Co-chaperone required during spermatogenesis to repress transposable elements and prevent their mobilization, which is essential for the germline integrity. Acts via the piRNA metabolic process, which mediates the repression of transposable elements during meiosis by forming complexes composed of piRNAs and Piwi proteins and govern the methylation and subsequent repression of transposons. Acts as a co-chaperone via its interaction with HSP90 and is required for the piRNA amplification process, the secondary piRNA biogenesis. May be required together with HSP90 in removal of 16 nucleotide ping-pong by-products from Piwi complexes, possibly facilitating turnover of Piwi complexes. The polypeptide is Inactive peptidyl-prolyl cis-trans isomerase FKBP6 (FKBP6) (Equus caballus (Horse)).